Reading from the N-terminus, the 180-residue chain is Probable DNA replication complex GINS protein PSF2 (180 aa).

It belongs to the GINS2/PSF2 family. As to quaternary structure, component of the GINS complex which is a heterotetramer of gins1, gins2, gins3 and gins4.

The protein resides in the nucleus. In terms of biological role, required for correct functioning of the GINS complex, a complex that plays an essential role in the initiation of DNA replication, and progression of DNA replication forks. GINS complex is a core component of CDC45-MCM-GINS (CMG) helicase, the molecular machine that unwinds template DNA during replication, and around which the replisome is built. In Caenorhabditis elegans, this protein is Probable DNA replication complex GINS protein PSF2 (psf-2).